We begin with the raw amino-acid sequence, 476 residues long: Adenosylhomocysteinase (476 aa).

Substrate-binding residues include Thr67, Asp142, and Glu202. 203 to 205 (TTT) serves as a coordination point for NAD(+). Substrate contacts are provided by Lys232 and Asp236. NAD(+) is bound by residues Asn237, 266–271 (GYGDVG), Glu289, Asn324, 345–347 (IGH), and Asn390.

Belongs to the adenosylhomocysteinase family. NAD(+) serves as cofactor.

The protein resides in the cytoplasm. The catalysed reaction is S-adenosyl-L-homocysteine + H2O = L-homocysteine + adenosine. Its pathway is amino-acid biosynthesis; L-homocysteine biosynthesis; L-homocysteine from S-adenosyl-L-homocysteine: step 1/1. Its function is as follows. May play a key role in the regulation of the intracellular concentration of adenosylhomocysteine. This is Adenosylhomocysteinase from Synechococcus sp. (strain CC9902).